The following is a 67-amino-acid chain: ATP synthase F(0) complex subunit 8 (67 aa).

A helical membrane pass occupies residues 8–24; that stretch reads PWFITILSMIITLFILF. Residue K54 is modified to N6-acetyllysine; alternate. K54 carries the N6-succinyllysine; alternate modification. An N6-acetyllysine modification is found at K57.

This sequence belongs to the ATPase protein 8 family. In terms of assembly, component of the ATP synthase complex composed at least of ATP5F1A/subunit alpha, ATP5F1B/subunit beta, ATP5MC1/subunit c (homooctomer), MT-ATP6/subunit a, MT-ATP8/subunit 8, ATP5ME/subunit e, ATP5MF/subunit f, ATP5MG/subunit g, ATP5MK/subunit k, ATP5MJ/subunit j, ATP5F1C/subunit gamma, ATP5F1D/subunit delta, ATP5F1E/subunit epsilon, ATP5PF/subunit F6, ATP5PB/subunit b, ATP5PD/subunit d, ATP5PO/subunit OSCP. ATP synthase complex consists of a soluble F(1) head domain (subunits alpha(3) and beta(3)) - the catalytic core - and a membrane F(0) domain - the membrane proton channel (subunits c, a, 8, e, f, g, k and j). These two domains are linked by a central stalk (subunits gamma, delta, and epsilon) rotating inside the F1 region and a stationary peripheral stalk (subunits F6, b, d, and OSCP). Interacts with PRICKLE3.

The protein localises to the mitochondrion membrane. Functionally, subunit 8, of the mitochondrial membrane ATP synthase complex (F(1)F(0) ATP synthase or Complex V) that produces ATP from ADP in the presence of a proton gradient across the membrane which is generated by electron transport complexes of the respiratory chain. ATP synthase complex consist of a soluble F(1) head domain - the catalytic core - and a membrane F(1) domain - the membrane proton channel. These two domains are linked by a central stalk rotating inside the F(1) region and a stationary peripheral stalk. During catalysis, ATP synthesis in the catalytic domain of F(1) is coupled via a rotary mechanism of the central stalk subunits to proton translocation. In vivo, can only synthesize ATP although its ATP hydrolase activity can be activated artificially in vitro. Part of the complex F(0) domain. The chain is ATP synthase F(0) complex subunit 8 from Orycteropus afer (Aardvark).